Consider the following 493-residue polypeptide: NAD(P)H-quinone oxidoreductase chain 4, chloroplastic (493 aa).

14 helical membrane-spanning segments follow: residues 4–24, 34–54, 87–107, 111–131, 134–154, 167–187, 212–232, 242–262, 276–296, 313–333, 334–354, 385–405, 417–437, and 462–482; these read FPWL…IPLL, WYTL…FGYY, MGLI…AWPI, PKLF…LFTS, LFLF…LISL, FIFY…TVCF, ILYL…PFHT, HYST…YGWI, FAPW…SVCL, MGFV…GAIC, QMIS…TTYD, SLAL…LGII, FIIL…LSML, and VFII…PNIL.

Belongs to the complex I subunit 4 family.

It is found in the plastid. The protein localises to the chloroplast thylakoid membrane. The catalysed reaction is a plastoquinone + NADH + (n+1) H(+)(in) = a plastoquinol + NAD(+) + n H(+)(out). The enzyme catalyses a plastoquinone + NADPH + (n+1) H(+)(in) = a plastoquinol + NADP(+) + n H(+)(out). In Chara vulgaris (Common stonewort), this protein is NAD(P)H-quinone oxidoreductase chain 4, chloroplastic.